The primary structure comprises 229 residues: uncharacterized protein (229 aa).

22–29 (GMIAFGKT) lines the ATP pocket.

This is an uncharacterized protein from Mycoplasma pneumoniae (strain ATCC 29342 / M129 / Subtype 1) (Mycoplasmoides pneumoniae).